Reading from the N-terminus, the 572-residue chain is Probable terpene synthase 13 (572 aa).

Positions 326, 330, and 478 each coordinate Mg(2+). The DDXXD motif signature appears at 326–330 (DDIFD).

This sequence belongs to the terpene synthase family. The cofactor is Mg(2+).

Its function is as follows. Probable sesquiterpene synthase. In Ricinus communis (Castor bean), this protein is Probable terpene synthase 13 (TPS13).